The following is a 360-amino-acid chain: MPGTVATLRFQLLPPEPDDAFWGAPCEQPLERRYQALPALVCIMCCLFGVVYCFFGYRCFKAVLFLTGLLFGSVVIFLLCYRERVLETQLSAGASAGIALGIGLLCGLVAMLVRSVGLFLVGLLLGLLLAAAALLGSAPYYQPGSVWGPLGLLLGGGLLCALLTLRWPRPLTTLATAVTGAALIATAADYFAELLLLGRYVVERLRAAPVPPLCWRSWALLALWPLLSLMGVLVQWRVTAEGDSHTEVVISRQRRRVQLMRIRQQEDRKEKRRKKRPPRAPLRGPRAPPRPGPPDPAYRRRPVPIKRFNGDVLSPSYIQSFRDRQTGSSLSSFMASPTDADYEYGSRGPLTACSGPPVRV.

7 consecutive transmembrane segments (helical) span residues 36–56, 59–79, 93–113, 116–136, 145–165, 177–197, and 218–238; these read ALPALVCIMCCLFGVVYCFFG, CFKAVLFLTGLLFGSVVIFLL, GASAGIALGIGLLCGLVAMLV, VGLFLVGLLLGLLLAAAALLG, SVWGPLGLLLGGGLLCALLTL, AVTGAALIATAADYFAELLLL, and WALLALWPLLSLMGVLVQWRV. 2 disordered regions span residues 260–304 and 324–360; these read MRIR…RPVP and RQTGSSLSSFMASPTDADYEYGSRGPLTACSGPPVRV. The span at 286-296 shows a compositional bias: pro residues; it reads RAPPRPGPPDP. Residues 326–335 are compositionally biased toward polar residues; that stretch reads TGSSLSSFMA.

This sequence belongs to the TMEM198 family. As to quaternary structure, interacts with LRP6.

It is found in the membrane. The protein resides in the cell membrane. The protein localises to the cytoplasmic vesicle. Functionally, promotes LRP6 phosphorylation by casein kinases and thereby plays a role in Wnt signaling. May be a membrane scaffold protein involved in the self-aggregation of LRP6 to further enhance its activity. This Homo sapiens (Human) protein is Transmembrane protein 198 (TMEM198).